The following is a 483-amino-acid chain: Aspartyl/glutamyl-tRNA(Asn/Gln) amidotransferase subunit B (483 aa).

This sequence belongs to the GatB/GatE family. GatB subfamily. In terms of assembly, heterotrimer of A, B and C subunits.

The catalysed reaction is L-glutamyl-tRNA(Gln) + L-glutamine + ATP + H2O = L-glutaminyl-tRNA(Gln) + L-glutamate + ADP + phosphate + H(+). It carries out the reaction L-aspartyl-tRNA(Asn) + L-glutamine + ATP + H2O = L-asparaginyl-tRNA(Asn) + L-glutamate + ADP + phosphate + 2 H(+). In terms of biological role, allows the formation of correctly charged Asn-tRNA(Asn) or Gln-tRNA(Gln) through the transamidation of misacylated Asp-tRNA(Asn) or Glu-tRNA(Gln) in organisms which lack either or both of asparaginyl-tRNA or glutaminyl-tRNA synthetases. The reaction takes place in the presence of glutamine and ATP through an activated phospho-Asp-tRNA(Asn) or phospho-Glu-tRNA(Gln). This chain is Aspartyl/glutamyl-tRNA(Asn/Gln) amidotransferase subunit B, found in Lachnospira eligens (strain ATCC 27750 / DSM 3376 / VPI C15-48 / C15-B4) (Eubacterium eligens).